The chain runs to 3108 residues: Probable polyketide synthase 39 (3108 aa).

The Ketosynthase family 3 (KS3) domain occupies 9–440; it reads DDDVAVIGIG…GSNVCLILSE (432 aa). Active-site for beta-ketoacyl synthase activity residues include Cys181, His320, and His363. An acyl/malonyl transferase region spans residues 643 to 676; the sequence is GVSADIIIGHSLGEISSAYCSGMIDFQTLCYLTY. The active-site For acyl/malonyl transferase activity is the Ser653. The interval 939 to 1068 is N-terminal hotdog fold; the sequence is HEKIKSEGPS…GNFSLFKHNI (130 aa). The PKS/mFAS DH domain maps to 939-1265; the sequence is HEKIKSEGPS…CTIAASNPDS (327 aa). His980 acts as the Proton acceptor; for dehydratase activity in catalysis. Residues 1085–1265 form a C-terminal hotdog fold region; the sequence is NFTSISKQDL…CTIAASNPDS (181 aa). Asp1157 functions as the Proton donor; for dehydratase activity in the catalytic mechanism. Positions 1375-1435 are disordered; it reads NNNNNNNNNN…NNNNNNNNNN (61 aa). A Carrier domain is found at 2566–2643; the sequence is GNNEIIHSTI…QSIEIIKSAL (78 aa). Ser2603 is subject to O-(pantetheine 4'-phosphoryl)serine. A helical transmembrane segment spans residues 2702–2722; the sequence is IFLTGSTGFLGAYLLMELIKM.

The cofactor is pantetheine 4'-phosphate.

The protein resides in the membrane. Its function is as follows. Probable polyketide synthase. This Dictyostelium discoideum (Social amoeba) protein is Probable polyketide synthase 39 (pks39).